Here is a 292-residue protein sequence, read N- to C-terminus: ATP synthase gamma chain (292 aa).

This sequence belongs to the ATPase gamma chain family. In terms of assembly, F-type ATPases have 2 components, CF(1) - the catalytic core - and CF(0) - the membrane proton channel. CF(1) has five subunits: alpha(3), beta(3), gamma(1), delta(1), epsilon(1). CF(0) has three main subunits: a, b and c.

The protein resides in the cell inner membrane. Produces ATP from ADP in the presence of a proton gradient across the membrane. The gamma chain is believed to be important in regulating ATPase activity and the flow of protons through the CF(0) complex. The sequence is that of ATP synthase gamma chain from Methylobacterium sp. (strain 4-46).